We begin with the raw amino-acid sequence, 685 residues long: Probable cysteine desulfurase (685 aa).

Positions 1–282 are cargo-loading domain; it reads MTRSPCSTTS…RDEHEVFDVA (282 aa). Disordered stretches follow at residues 48-135 and 162-185; these read SIRP…TSAG and PTPA…VPDT. Residues 71 to 85 are compositionally biased toward low complexity; the sequence is ATAATSAGRTAAGTA. Residues 102-121 are compositionally biased toward pro residues; sequence LPPPASPAPEAPPQAAPPAP. Residues 122–135 are compositionally biased toward low complexity; sequence RGSAPDATAATSAG. The segment covering 164 to 178 has biased composition (pro residues); the sequence is PAGPEAPPQSAPPAP. Position 502 is an N6-(pyridoxal phosphate)lysine (K502). C640 serves as the catalytic Cysteine persulfide intermediate.

It belongs to the class-V pyridoxal-phosphate-dependent aminotransferase family. Csd subfamily. Isolated from bacteria in a complex with encapsulin 2A (AC I3NID5), strongly suggesting it is found in a type 2A encapsulin nanocompartment. There are 1-2 copies of this protein in each encapsulin shell. Requires pyridoxal 5'-phosphate as cofactor.

Its subcellular location is the encapsulin nanocompartment. It is found in the cell membrane. It catalyses the reaction (sulfur carrier)-H + L-cysteine = (sulfur carrier)-SH + L-alanine. Its function is as follows. Cargo protein of a type 2A encapsulin nanocompartment involved in sulfur metabolism. Cysteine desulfurases mobilize the sulfur from L-cysteine to yield L-alanine, an essential step in sulfur metabolism for biosynthesis of a variety of sulfur-containing biomolecules. This is Probable cysteine desulfurase from Mycolicibacterium paratuberculosis (strain ATCC BAA-968 / K-10) (Mycobacterium paratuberculosis).